A 199-amino-acid polypeptide reads, in one-letter code: Phosphoheptose isomerase (199 aa).

Residues 36–198 form the SIS domain; sequence MSQCLLNEHK…DRKLIPSSED (163 aa). 51–53 is a binding site for substrate; that stretch reads NGG. Residues histidine 60 and glutamate 64 each contribute to the Zn(2+) site. Substrate is bound by residues glutamate 64, 93-94, 119-121, serine 124, and glutamine 174; these read ND and STS. Glutamine 174 and histidine 182 together coordinate Zn(2+).

Belongs to the SIS family. GmhA subfamily. Homotetramer. Zn(2+) is required as a cofactor.

It is found in the cytoplasm. It catalyses the reaction 2 D-sedoheptulose 7-phosphate = D-glycero-alpha-D-manno-heptose 7-phosphate + D-glycero-beta-D-manno-heptose 7-phosphate. It functions in the pathway carbohydrate biosynthesis; D-glycero-D-manno-heptose 7-phosphate biosynthesis; D-glycero-alpha-D-manno-heptose 7-phosphate and D-glycero-beta-D-manno-heptose 7-phosphate from sedoheptulose 7-phosphate: step 1/1. In terms of biological role, catalyzes the isomerization of sedoheptulose 7-phosphate in D-glycero-D-manno-heptose 7-phosphate. The polypeptide is Phosphoheptose isomerase (Coxiella burnetii (strain RSA 331 / Henzerling II)).